Here is a 441-residue protein sequence, read N- to C-terminus: MVKLDFSSQDEENDEDLTKEFVRDEAPMEETTSEAVKQIATTTKETLKDVVVNKVIDVKDVVKEKVMQQTGMPEWAFVFLGFVFILLVLACAFCLIRKLFGKKRHGEKNKKGGLKGFFGKGQDVVDGKNIQGMAQDLEELGDAMEQNEKEQAEEKEEVKLGRIQYKLDYDFQQGQLTVTVIQAEDLPGMDMSGTSDPYVKLYLLPEKKKKVETKVHRKTLNPVFNETFIFKVAFNEITAKTLVFAIYDFDRFSKHDQIGQVLIPLGKIDLGAVIEEWKDIAPPPDDKEAEKSLGDICFSLRYVPTAGKLTVVILEAKNLKKMDVGGLSDPYVKIVLMQGGKRLKKKKTSIKKCTLNPYYNESFSFEVPFEQIQKVSLMITVMDYDKLGSNDAIGRCLLGCNGTGAELRHWMDMLASPRRPIAQWHTLGPVEEEGDKKDDKK.

At 1–69 (MVKLDFSSQD…DVVKEKVMQQ (69 aa)) the chain is on the vesicular side. The helical transmembrane segment at 70–96 (TGMPEWAFVFLGFVFILLVLACAFCLI) threads the bilayer. At 97 to 441 (RKLFGKKRHG…EEGDKKDDKK (345 aa)) the chain is on the cytoplasmic side. 2 consecutive C2 domains span residues 159–278 (KLGR…EEWK) and 292–425 (SLGD…AQWH). 13 residues coordinate Ca(2+): aspartate 190, aspartate 196, aspartate 248, phenylalanine 249, aspartate 250, serine 253, lysine 254, aspartate 256, aspartate 323, aspartate 329, aspartate 383, aspartate 385, and aspartate 391.

The protein belongs to the synaptotagmin family. The cofactor is Ca(2+). In terms of tissue distribution, localized to regions known to be rich in synapses and appears to be associated with synaptic vesicles. Also found in some non-neuronal secretory structures.

It is found in the cytoplasmic vesicle. The protein localises to the secretory vesicle. The protein resides in the synaptic vesicle membrane. Its subcellular location is the synapse. Its function is as follows. May have a regulatory role in the membrane interactions during trafficking of synaptic vesicles at the active zone of the synapse. It binds acidic phospholipids with a specificity that requires the presence of both an acidic head group and a diacyl backbone. Involved in necrotic cell death. This is Synaptotagmin-1 (snt-1) from Caenorhabditis elegans.